The chain runs to 461 residues: Protein transport protein HofB homolog (461 aa).

222–229 is an ATP binding site; the sequence is GPTGSGKT.

It belongs to the GSP E family.

The sequence is that of Protein transport protein HofB homolog (hofB) from Escherichia coli (strain K12).